Consider the following 108-residue polypeptide: UPF0060 membrane protein YnfA (108 aa).

Over 1–5 (MIKTT) the chain is Periplasmic. Residues 6–26 (LLFFATALCEIIGCFLPWLWL) form a helical membrane-spanning segment. The Cytoplasmic portion of the chain corresponds to 27-30 (KRNA). A helical membrane pass occupies residues 31–51 (SIWLLLPAGISLALFVWLLTL). The Periplasmic portion of the chain corresponds to 52-60 (HPAASGRVY). The chain crosses the membrane as a helical span at residues 61 to 81 (AAYGGVYVCTALMWLRVVDGV). The Cytoplasmic portion of the chain corresponds to 82–84 (KLT). The helical transmembrane segment at 85–105 (LYDWTGALIALCGMLIIVAGW) threads the bilayer. The Periplasmic segment spans residues 106–108 (GRT).

Belongs to the UPF0060 family.

It localises to the cell inner membrane. In Escherichia coli O139:H28 (strain E24377A / ETEC), this protein is UPF0060 membrane protein YnfA.